The chain runs to 67 residues: Bombesin (67 aa).

A signal peptide spans 1-30 (MLLLSAVKTLLLAWLGIVLVFMSIIKSAML). A propeptide spanning residues 31–49 (DFLQEAGKLEGIETYKKEA) is cleaved from the precursor. Glutamine 50 bears the Pyrrolidone carboxylic acid mark. Position 64 is a methionine amide (methionine 64).

Expressed by the skin glands.

It is found in the secreted. Functionally, stimulates smooth muscle contraction in isolated rat stomach strip. In Rana shuchinae (Sichuan frog), this protein is Bombesin.